A 798-amino-acid chain; its full sequence is Integrin beta-7 (798 aa).

An N-terminal signal peptide occupies residues 1-19; the sequence is MVALPMVLVLLLVLSRGES. Over 20-723 the chain is Extracellular; the sequence is ELDAKIPSTG…VRPQEKGADH (704 aa). In terms of domain architecture, PSI spans 44-92; the sequence is SCQPAPSCQKCILSHPSCAWCKQLNFTASGEAEARRCARREELLARGCP. Intrachain disulfides connect Cys51-Cys476, Cys54-Cys80, Cys64-Cys91, Cys216-Cys223, Cys271-Cys311, Cys412-Cys428, and Cys448-Cys474. Asn68 carries an N-linked (GlcNAc...) asparagine glycan. The segment at 98–124 is disordered; sequence EPRGQQEVLQDQPLSQGARGEGATQLA. Residues 150 to 389 form the VWFA domain; the sequence is YPVDLYYLMD…QLIMDAYNSL (240 aa). Mg(2+) contacts are provided by Ser161 and Ser163. Ca(2+) is bound by residues Ser163, Asp166, Asp167, and Asp198. Asn254, Asp256, Pro258, and Glu259 together coordinate Ca(2+). Glu259 contributes to the Mg(2+) binding site. N-linked (GlcNAc...) asparagine glycosylation occurs at Asn279. Ca(2+)-binding residues include Asp289 and Glu373. Asn434 is a glycosylation site (N-linked (GlcNAc...) asparagine). N-linked (GlcNAc...) asparagine glycosylation occurs at Asn477. Disulfide bonds link Cys478–Cys497, Cys488–Cys500, Cys502–Cys511, Cys513–Cys545, Cys527–Cys543, Cys537–Cys548, Cys550–Cys559, Cys561–Cys582, Cys566–Cys580, Cys574–Cys585, Cys587–Cys596, Cys598–Cys621, Cys605–Cys619, Cys613–Cys624, Cys626–Cys635, Cys638–Cys641, Cys645–Cys688, Cys651–Cys670, and Cys654–Cys666. I-EGF domains lie at 478–512, 513–560, 561–597, and 598–636; these read CSDTQPQAPHCSDGQGHLQCGVCSCAPGRLGRLCE, CSVA…HLCE, CDDASCERHEGILCGGFGRCQCGVCHCHANRTGRACE, and CSGDMDSCISPEGGLCSGHGRCKCNRCQCLDGYYGALCD. An N-linked (GlcNAc...) asparagine glycan is attached at Asn531. Residue Asn590 is glycosylated (N-linked (GlcNAc...) asparagine). Asn665 and Asn674 each carry an N-linked (GlcNAc...) asparagine glycan. A helical membrane pass occupies residues 724 to 746; that stretch reads TQAIVLGCVGGIVAVGLGLVLAY. Residues 747–798 lie on the Cytoplasmic side of the membrane; it reads RLSVEIYDRREYSRFEKEQQQLNWKQDSNPLYKSAITTTINPRFQEADSPTL. Tyr778 bears the Phosphotyrosine; by Tyr-kinases mark.

The protein belongs to the integrin beta chain family. In terms of assembly, heterodimer of an alpha and a beta subunit. ITGB7/beta-7 associates with either ITGA4/alpha-4 or ITGAE/alpha-E. Integrin ITGA4/ITGB7 interacts with MADCAM1. Integrin ITGA4/ITGB7 interacts with VCAM1 and fibronectin. Interacts with FLNA (via filamin repeats 4, 9, 12, 17, 19, 21, and 23). As to quaternary structure, (Microbial infection) May interact with HIV-1 gp120. Expressed in a variety of leukocyte lines.

It is found in the cell membrane. Functionally, integrin ITGA4/ITGB7 (alpha-4/beta-7) (Peyer patches-specific homing receptor LPAM-1) is an adhesion molecule that mediates lymphocyte migration and homing to gut-associated lymphoid tissue (GALT). Integrin ITGA4/ITGB7 interacts with the cell surface adhesion molecules MADCAM1 which is normally expressed by the vascular endothelium of the gastrointestinal tract. Also interacts with VCAM1 and fibronectin, an extracellular matrix component. It recognizes one or more domains within the alternatively spliced CS-1 region of fibronectin. Interactions involve the tripeptide L-D-T in MADCAM1, and L-D-V in fibronectin. Integrin ITGAE/ITGB7 (alpha-E/beta-7, HML-1) is a receptor for E-cadherin. Its function is as follows. (Microbial infection) Binds to HIV-1 gp120, thereby allowing the virus to enter GALT, which is thought to be the major trigger of AIDS disease. Interaction would involve a tripeptide L-D-I in HIV-1 gp120. This is Integrin beta-7 (ITGB7) from Homo sapiens (Human).